The primary structure comprises 298 residues: Ethanolamine ammonia-lyase small subunit (298 aa).

Adenosylcob(III)alamin is bound by residues Val210, Glu231, and Cys261.

This sequence belongs to the EutC family. In terms of assembly, the basic unit is a heterodimer which dimerizes to form tetramers. The heterotetramers trimerize; 6 large subunits form a core ring with 6 small subunits projecting outwards. Adenosylcob(III)alamin is required as a cofactor.

It is found in the bacterial microcompartment. The catalysed reaction is ethanolamine = acetaldehyde + NH4(+). It functions in the pathway amine and polyamine degradation; ethanolamine degradation. In terms of biological role, catalyzes the deamination of various vicinal amino-alcohols to oxo compounds. Allows this organism to utilize ethanolamine as the sole source of nitrogen and carbon in the presence of external vitamin B12. In Salmonella typhi, this protein is Ethanolamine ammonia-lyase small subunit.